We begin with the raw amino-acid sequence, 94 residues long: Prepro-gonadotropin-releasing hormone-like protein (94 aa).

The first 21 residues, 1-21, serve as a signal peptide directing secretion; it reads MNACILLTTLVTMITIEKVQG.

Its subcellular location is the secreted. In terms of biological role, neuropeptide involved in reproduction. May be an important hormone in the regulation of gonadal maturation. The chain is Prepro-gonadotropin-releasing hormone-like protein from Ruditapes philippinarum (Japanese carpet shell).